Here is a 585-residue protein sequence, read N- to C-terminus: Zinc finger protein 496 (585 aa).

The tract at residues Met1 to Ser41 is disordered. The segment covering Ala11 to Lys20 has biased composition (basic and acidic residues). Residue Lys13 forms a Glycyl lysine isopeptide (Lys-Gly) (interchain with G-Cter in SUMO2) linkage. The span at Gly26–Pro38 shows a compositional bias: pro residues. The region spanning Arg42–Pro124 is the SCAN box domain. Residues Asp141–Ala167 are disordered. Residue Ser182 is modified to Phosphoserine. Positions Ser220–Ala294 constitute a KRAB domain. The tract at residues Ser358–Glu397 is disordered. A compositionally biased stretch (basic and acidic residues) spans Glu373–His383. A compositionally biased stretch (polar residues) spans Ala387 to Glu397. The C2H2-type 1; degenerate zinc-finger motif lies at Tyr405–Arg427. 2 consecutive C2H2-type zinc fingers follow at residues His433–His455 and Tyr461–His483. The disordered stretch occupies residues His483–Gly506. Residue Lys494 forms a Glycyl lysine isopeptide (Lys-Gly) (interchain with G-Cter in SUMO2) linkage. 2 C2H2-type zinc fingers span residues Phe520–His543 and Phe551–His573. Residues Lys575–Lys579 carry the Nuclear localization signal motif.

This sequence belongs to the krueppel C2H2-type zinc-finger protein family. As to quaternary structure, interacts (via zinc-fingers) with JARID2. Interacts with NSD1.

It is found in the nucleus. Its function is as follows. DNA-binding transcription factor that can both act as an activator and a repressor. The chain is Zinc finger protein 496 (Znf496) from Mus musculus (Mouse).